The sequence spans 624 residues: Leucine-rich repeat, immunoglobulin-like domain and transmembrane domain-containing protein 1 (624 aa).

The first 21 residues, 1–21 (MWVALGMLWLLALGGPHQAWG), serve as a signal peptide directing secretion. An LRRNT domain is found at 22 to 59 (FCPSECSCSLRILSDGSKARTVVCSDPDLTLPPASIPP). The Lumenal segment spans residues 22 to 527 (FCPSECSCSL…EVVDAEGTQR (506 aa)). LRR repeat units follow at residues 60 to 81 (DTCK…TFRP), 84 to 105 (RLEQ…MLRG), 108 to 129 (RLRE…ALRD), 132 to 153 (QLQL…AAHF), and 156 to 177 (NLTF…LLDV). An N-linked (GlcNAc...) asparagine glycan is attached at asparagine 156. The LRRCT domain occupies 201–254 (NPWVCDCRLYDLVHLLDGWVSSNLIFIEARLRCASPRSLAGVAFSQLELRKCQS). The Ig-like C2-type domain occupies 267–336 (PLGSTVLLRC…YICQAKNFLG (70 aa)). A disulfide bridge links cysteine 276 with cysteine 329. 2 N-linked (GlcNAc...) asparagine glycosylation sites follow: asparagine 297 and asparagine 456. One can recognise a Fibronectin type-III domain in the interval 431–519 (MVRSLKVVGD…QCVIFSTDEV (89 aa)). Residues 526 to 549 (QRLINMVVISVAAIIALPPTLLVC) form an LRR 6 repeat. The helical transmembrane segment at 528–548 (LINMVVISVAAIIALPPTLLV) threads the bilayer. The Cytoplasmic portion of the chain corresponds to 549 to 624 (CCGALRRRCH…GGRRINEYFC (76 aa)).

As to quaternary structure, may form a homodimer. Interacts with LRIT2; may form a heterodimer with LRIT2. Interacts (via its N-terminal extracellular domain) with metabotropic glutamate receptor GRM6. Interacts (via its extreme C-terminus) with the scaffold protein FRMPD2 (via the third PDZ domain); the interaction leads to their colocalization in photoreceptor synapses. Expressed predominantly in developing photoreceptor and bipolar cells.

The protein resides in the endoplasmic reticulum membrane. The protein localises to the cell projection. It is found in the dendrite. Its function is as follows. Photoreceptor synaptic protein essential for normal vision. Involved in synapse formation in cone photoreceptor cells. The protein is Leucine-rich repeat, immunoglobulin-like domain and transmembrane domain-containing protein 1 (Lrit1) of Mus musculus (Mouse).